We begin with the raw amino-acid sequence, 484 residues long: Hexokinase-1 (484 aa).

A Hexokinase domain is found at 25–465; sequence KTLQDHLDEL…SGVGAALVSA (441 aa). The segment at 79–212 is hexokinase small subdomain; it reads DGNEHGSYLA…CNNVRLNAIL (134 aa). Position 90–95 (90–95) interacts with ATP; it reads DLGGTN. Substrate contacts are provided by residues 160-161, 177-178, and 213-214; these read SY, TK, and SD. A hexokinase large subdomain region spans residues 213–454; the sequence is SDTTGTLVAS…SKVVTIPAED (242 aa). Thr-237 lines the ATP pocket. Asn-240, Glu-269, and Glu-302 together coordinate substrate. Residues 307–308, 344–348, and 419–423 each bind ATP; these read GC, TSVLS, and SVYNL.

The protein belongs to the hexokinase family. Monomer.

It carries out the reaction a D-hexose + ATP = a D-hexose 6-phosphate + ADP + H(+). The catalysed reaction is D-mannose + ATP = D-mannose 6-phosphate + ADP + H(+). The enzyme catalyses D-fructose + ATP = D-fructose 6-phosphate + ADP + H(+). It catalyses the reaction D-glucose + ATP = D-glucose 6-phosphate + ADP + H(+). It participates in carbohydrate metabolism; hexose metabolism. The protein operates within carbohydrate degradation; glycolysis; D-glyceraldehyde 3-phosphate and glycerone phosphate from D-glucose: step 1/4. Catalyzes the phosphorylation of hexose (six-carbon sugars) to hexose 6-phosphate. Phosphorylates D-fructose, D-mannose and, to a lower extent, D-glucose. Compared to hxk2, has low affinity for D-glucose. The chain is Hexokinase-1 from Schizosaccharomyces pombe (strain 972 / ATCC 24843) (Fission yeast).